The primary structure comprises 488 residues: Probable (S)-N-methylcoclaurine 3'-hydroxylase isozyme 2 (488 aa).

Residues 2–21 (EVLSIAIVSFSFLLFLFFIL) form a helical membrane-spanning segment. Cys427 contributes to the heme binding site.

The protein belongs to the cytochrome P450 family. The cofactor is heme. Expressed at low levels in roots.

Its subcellular location is the endoplasmic reticulum membrane. The protein resides in the microsome membrane. It catalyses the reaction (S)-N-methylcoclaurine + reduced [NADPH--hemoprotein reductase] + O2 = (S)-3'-hydroxy-N-methylcoclaurine + oxidized [NADPH--hemoprotein reductase] + H2O + H(+). The protein operates within alkaloid biosynthesis; (S)-reticuline biosynthesis; (S)-reticuline from (S)-norcoclaurine: step 3/4. Its function is as follows. 3'-hydroxylation of (S)-N-methylcoclaurine. The protein is Probable (S)-N-methylcoclaurine 3'-hydroxylase isozyme 2 (CYP80B2) of Coptis japonica (Japanese goldthread).